A 254-amino-acid polypeptide reads, in one-letter code: PSME3-interacting protein (254 aa).

Residue M1 is modified to N-acetylmethionine. A Phosphoserine modification is found at S17. A compositionally biased stretch (basic and acidic residues) spans 22–39 (DERRKRRQEEWEKVRKPE). The disordered stretch occupies residues 22-52 (DERRKRRQEEWEKVRKPEDPEECPEEVYDPR). Residue K139 is modified to N6-acetyllysine. The disordered stretch occupies residues 155-195 (GAVKHKSSESGNSVKRLKPDPEPDDKNQEPSSCKSLGNTSL). Residues 171–182 (LKPDPEPDDKNQ) show a composition bias toward basic and acidic residues. Residues 183-195 (EPSSCKSLGNTSL) show a composition bias toward polar residues. The interval 201-254 (HCPSAAVCIGILPGLGAYSGSSDSESSSDSEGTINATGKIVSSIFRTNTFLEAP) is interaction with PSME3. S222 and S228 each carry phosphoserine; by CK2.

In terms of assembly, interacts (via C-terminus) with both free and 20S proteasome-bound forms of the proteasome activator complex subunit PSME3; the interaction is direct. Phosphorylation by CK2 stabilizes the interaction with PSME3.

The protein resides in the nucleus. In terms of biological role, promotes the association of the proteasome activator complex subunit PSME3 with the 20S proteasome and regulates its activity. Inhibits PSME3-mediated degradation of some proteasome substrates, probably by affecting their diffusion rate into the catalytic chamber of the proteasome. Also inhibits the interaction of PSME3 with COIL, inhibits accumulation of PSME3 in Cajal bodies and positively regulates the number of Cajal bodies in the nucleus. The sequence is that of PSME3-interacting protein from Homo sapiens (Human).